A 333-amino-acid polypeptide reads, in one-letter code: MDERLVSGSALGGEAAFEPTLRPQYLHEYIGQDKVKENLQVFIEAAKLREETLDHVLLYGPPGLGKTTLAAIIANEMGVKMRATSGPALERPGDLAALLTSLEPGDVLFIDEIHRLPRTVEEVLYPAMEDYCLDITVGKGPEARSLRLDLPPFTLVGATTRAGALSAPLRDRFGVISRLEYYQVDQLAQIIERAAAILHIIINNEAALELARRARGTPRIANRLLRRVRDFAQVRGDGEITLPLAVEALERLQVDRLGLDHIDHKLLLAIIEKFAGGPVGLETMAAVIGEEAQTIEEVYEPYLLQIGLLQRTPRGRVATPAAYAHLGMEVPKR.

Positions 1-182 (MDERLVSGSA…FGVISRLEYY (182 aa)) are large ATPase domain (RuvB-L). Residues Leu21, Arg22, Gly63, Lys66, Thr67, Thr68, 129-131 (EDY), Arg172, Tyr182, and Arg219 each bind ATP. Thr67 lines the Mg(2+) pocket. The small ATPAse domain (RuvB-S) stretch occupies residues 183-253 (QVDQLAQIIE…LAVEALERLQ (71 aa)). The interval 256–333 (RLGLDHIDHK…AHLGMEVPKR (78 aa)) is head domain (RuvB-H). The DNA site is built by Arg311 and Arg316.

It belongs to the RuvB family. In terms of assembly, homohexamer. Forms an RuvA(8)-RuvB(12)-Holliday junction (HJ) complex. HJ DNA is sandwiched between 2 RuvA tetramers; dsDNA enters through RuvA and exits via RuvB. An RuvB hexamer assembles on each DNA strand where it exits the tetramer. Each RuvB hexamer is contacted by two RuvA subunits (via domain III) on 2 adjacent RuvB subunits; this complex drives branch migration. In the full resolvosome a probable DNA-RuvA(4)-RuvB(12)-RuvC(2) complex forms which resolves the HJ.

It localises to the cytoplasm. The enzyme catalyses ATP + H2O = ADP + phosphate + H(+). The RuvA-RuvB-RuvC complex processes Holliday junction (HJ) DNA during genetic recombination and DNA repair, while the RuvA-RuvB complex plays an important role in the rescue of blocked DNA replication forks via replication fork reversal (RFR). RuvA specifically binds to HJ cruciform DNA, conferring on it an open structure. The RuvB hexamer acts as an ATP-dependent pump, pulling dsDNA into and through the RuvAB complex. RuvB forms 2 homohexamers on either side of HJ DNA bound by 1 or 2 RuvA tetramers; 4 subunits per hexamer contact DNA at a time. Coordinated motions by a converter formed by DNA-disengaged RuvB subunits stimulates ATP hydrolysis and nucleotide exchange. Immobilization of the converter enables RuvB to convert the ATP-contained energy into a lever motion, pulling 2 nucleotides of DNA out of the RuvA tetramer per ATP hydrolyzed, thus driving DNA branch migration. The RuvB motors rotate together with the DNA substrate, which together with the progressing nucleotide cycle form the mechanistic basis for DNA recombination by continuous HJ branch migration. Branch migration allows RuvC to scan DNA until it finds its consensus sequence, where it cleaves and resolves cruciform DNA. The sequence is that of Holliday junction branch migration complex subunit RuvB from Geobacillus thermodenitrificans (strain NG80-2).